Reading from the N-terminus, the 356-residue chain is Glucose-1-phosphate thymidylyltransferase (356 aa).

Mg(2+) is bound by residues D107 and D221.

This sequence belongs to the glucose-1-phosphate thymidylyltransferase family. Requires Mg(2+) as cofactor.

It catalyses the reaction dTTP + alpha-D-glucose 1-phosphate + H(+) = dTDP-alpha-D-glucose + diphosphate. It participates in antibiotic biosynthesis. Its function is as follows. Involved in the biosynthesis of the two 2,6-deoxysugars, dTDP-L-oleandrose and dTDP-D-desosamine, attached to the macrolactone ring oleandolide to produce the aglycone antibiotic oleandomycin. Catalyzes the formation of dTDP-glucose from deoxythymidine triphosphate (dTTP) and glucose 1-phosphate. This Streptomyces antibioticus protein is Glucose-1-phosphate thymidylyltransferase.